The sequence spans 339 residues: Ribosomal RNA small subunit methyltransferase C (339 aa).

Belongs to the methyltransferase superfamily. RsmC family. As to quaternary structure, monomer.

The protein localises to the cytoplasm. It carries out the reaction guanosine(1207) in 16S rRNA + S-adenosyl-L-methionine = N(2)-methylguanosine(1207) in 16S rRNA + S-adenosyl-L-homocysteine + H(+). Functionally, specifically methylates the guanine in position 1207 of 16S rRNA in the 30S particle. The polypeptide is Ribosomal RNA small subunit methyltransferase C (Photobacterium profundum (strain SS9)).